The sequence spans 367 residues: Anhydro-N-acetylmuramic acid kinase (367 aa).

13 to 20 is an ATP binding site; sequence GTSMDGAD.

The protein belongs to the anhydro-N-acetylmuramic acid kinase family.

The enzyme catalyses 1,6-anhydro-N-acetyl-beta-muramate + ATP + H2O = N-acetyl-D-muramate 6-phosphate + ADP + H(+). The protein operates within amino-sugar metabolism; 1,6-anhydro-N-acetylmuramate degradation. Its pathway is cell wall biogenesis; peptidoglycan recycling. In terms of biological role, catalyzes the specific phosphorylation of 1,6-anhydro-N-acetylmuramic acid (anhMurNAc) with the simultaneous cleavage of the 1,6-anhydro ring, generating MurNAc-6-P. Is required for the utilization of anhMurNAc either imported from the medium or derived from its own cell wall murein, and thus plays a role in cell wall recycling. The sequence is that of Anhydro-N-acetylmuramic acid kinase from Neisseria meningitidis serogroup C / serotype 2a (strain ATCC 700532 / DSM 15464 / FAM18).